A 722-amino-acid chain; its full sequence is Serine/threonine-protein kinase MARK2 (722 aa).

Positions 1 to 46 are disordered; that stretch reads MSSARTPLPTLNERDTEQPTLGHLDSKPSSKSNMLRGRNSATSADE. Polar residues predominate over residues 27–45; it reads KPSSKSNMLRGRNSATSAD. A Phosphoserine modification is found at serine 40. Residues 53-304 enclose the Protein kinase domain; sequence YRLLKTIGKG…LEQIMKDRWM (252 aa). Threonine 58 is subject to Phosphothreonine; by autocatalysis. Residues 59–67 and lysine 82 contribute to the ATP site; that span reads IGKGNFAKV. Serine 91, serine 92, and serine 93 each carry phosphoserine; by CaMK1. Aspartate 175 (proton acceptor) is an active-site residue. Threonine 208 bears the Phosphothreonine; by LKB1 and TAOK1 mark. Position 212 is a phosphoserine; by GSK3-beta (serine 212). Position 274 is a phosphoserine; by autocatalysis (serine 274). Threonine 275 bears the Phosphothreonine; by autocatalysis mark. Threonine 294 carries the post-translational modification Phosphothreonine; by CaMK1. One can recognise a UBA domain in the interval 323-362; that stretch reads YKDPRRTELMVSMGYTREEIQDSLVGQRYNEVMATYLLLG. The segment at 373-576 is disordered; the sequence is ITLKPRPSAD…SQGRRGASGS (204 aa). Serine 408 and serine 409 each carry phosphoserine. Positions 417-431 are enriched in polar residues; sequence PTSNSYSKKTQSNNA. A compositionally biased stretch (basic and acidic residues) spans 432-442; sequence ENKRPEEETGR. At serine 453 the chain carries Phosphoserine. Threonine 464 carries the post-translational modification Phosphothreonine. The segment covering 464–483 has biased composition (polar residues); that stretch reads TPTPSTNSVLSTSTNRSRNS. 2 positions are modified to phosphoserine: serine 483 and serine 490. Polar residues predominate over residues 492–505; that stretch reads GQASIQNGKDSTAP. The segment covering 511–524 has biased composition (low complexity); that stretch reads ASPSAHNISSSSGA. Phosphoserine occurs at positions 512, 514, and 535. Threonine 539 is subject to Phosphothreonine; by PKC/PRKCZ. Serine 562 and serine 656 each carry phosphoserine. Residues 673–722 form the KA1 domain; it reads TPGHENFVQWEMEVCKLPRLSLNGVRFKRISGTSMAFKNIASKIANELKL.

This sequence belongs to the protein kinase superfamily. CAMK Ser/Thr protein kinase family. SNF1 subfamily. In terms of assembly, homodimer. Interacts (when phosphorylated at Thr-539) with YWHAZ. Interacts with MTCL1; the interaction is direct and increases MARK2 microtubule-binding ability. Interacts with PAK5; leading to inhibit the protein kinase activity. Interacts with MAPT/TAU. Interacts with YWHAB, YWHAG and YWHAQ. Requires Mg(2+) as cofactor. In terms of processing, autophosphorylated. Phosphorylated at Thr-208 by STK11/LKB1 in complex with STE20-related adapter-alpha (STRADA) pseudo kinase and CAB39. Phosphorylation at Thr-208 by TAOK1 activates the kinase activity, leading to phosphorylation and detachment of MAPT/TAU from microtubules. Phosphorylation at Ser-212 by GSK3-beta (GSK3B) inhibits the kinase activity. Phosphorylation by CaMK1 promotes activity and is required to promote neurite outgrowth. Phosphorylation at Thr-539 by PRKCZ/aPKC in polarized epithelial cells inhibits the kinase activity and promotes binding to 14-3-3 protein YWHAZ, leading to relocation from cell membrane to cytoplasm.

The protein resides in the cell membrane. It localises to the lateral cell membrane. The protein localises to the cytoplasm. It is found in the cytoskeleton. Its subcellular location is the cell projection. The protein resides in the dendrite. The catalysed reaction is L-seryl-[protein] + ATP = O-phospho-L-seryl-[protein] + ADP + H(+). The enzyme catalyses L-threonyl-[protein] + ATP = O-phospho-L-threonyl-[protein] + ADP + H(+). It catalyses the reaction L-seryl-[tau protein] + ATP = O-phospho-L-seryl-[tau protein] + ADP + H(+). It carries out the reaction L-threonyl-[tau protein] + ATP = O-phospho-L-threonyl-[tau protein] + ADP + H(+). Inhibited by hymenialdisine. Activated by phosphorylation on Thr-208 by STK11/LKB1 and TAOK1. Inhibited by phosphorylation at Ser-212 or Thr-539. Inhibited by PAK5; inhibition is independent of the kinase activity of PAK5. Its function is as follows. Serine/threonine-protein kinase. Involved in cell polarity and microtubule dynamics regulation. Phosphorylates CRTC2/TORC2, DCX, HDAC7, KIF13B, MAP2, MAP4 and RAB11FIP2. Phosphorylates the microtubule-associated protein MAPT/TAU. Plays a key role in cell polarity by phosphorylating the microtubule-associated proteins MAP2, MAP4 and MAPT/TAU at KXGS motifs, causing detachment from microtubules, and their disassembly. Regulates epithelial cell polarity by phosphorylating RAB11FIP2. Involved in the regulation of neuronal migration through its dual activities in regulating cellular polarity and microtubule dynamics, possibly by phosphorylating and regulating DCX. Regulates axogenesis by phosphorylating KIF13B, promoting interaction between KIF13B and 14-3-3 and inhibiting microtubule-dependent accumulation of KIF13B. Also required for neurite outgrowth and establishment of neuronal polarity. Regulates localization and activity of some histone deacetylases by mediating phosphorylation of HDAC7, promoting subsequent interaction between HDAC7 and 14-3-3 and export from the nucleus. Also acts as a positive regulator of the Wnt signaling pathway, probably by mediating phosphorylation of dishevelled proteins (DVL1, DVL2 and/or DVL3). Modulates the developmental decision to build a columnar versus a hepatic epithelial cell apparently by promoting a switch from a direct to a transcytotic mode of apical protein delivery. Essential for the asymmetric development of membrane domains of polarized epithelial cells. The chain is Serine/threonine-protein kinase MARK2 from Rattus norvegicus (Rat).